The sequence spans 481 residues: Probable zeta-carotene desaturase (481 aa).

The protein belongs to the zeta carotene desaturase family. The cofactor is decylplastoquinone. It depends on 6-decylubiquinone as a cofactor.

The enzyme catalyses 9,9'-di-cis-zeta-carotene + 2 a quinone = 7,7',9,9'-tetra-cis-lycopene + 2 a quinol. Its pathway is carotenoid biosynthesis; lycopene biosynthesis. Functionally, catalyzes the conversion of zeta-carotene to lycopene via the intermediary of neurosporene. It carries out two consecutive desaturations (introduction of double bonds) at positions C-7 and C-7'. The polypeptide is Probable zeta-carotene desaturase (zds) (Synechococcus elongatus (strain ATCC 33912 / PCC 7942 / FACHB-805) (Anacystis nidulans R2)).